The primary structure comprises 347 residues: Haptoglobin (347 aa).

Residues 1 to 18 form the signal peptide; it reads MRALGAVVALLLCGQLFA. A Sushi domain is found at 31–88; sequence DSCPKPPEIPKGYVEHMVRYHCQTYYKLRTAGDGVYTLDSNKQWTNKVTGEKLPECEA. 2 disulfide bridges follow: C52–C86 and C90–C207. Residues 103–345 form the Peptidase S1 domain; it reads IMGGSLDAKG…ILDWIQTTIA (243 aa). N-linked (GlcNAc...) asparagine glycans are attached at residues N125, N151, N183, and N232. 2 disulfides stabilise this stretch: C250-C281 and C292-C322. Residues 259 to 264 form an interaction with CD163 region; that stretch reads VPEKKT.

It belongs to the peptidase S1 family. In terms of assembly, tetramer of two alpha and two beta chains; disulfide-linked. The hemoglobin/haptoglobin complex is composed of a haptoglobin dimer bound to two hemoglobin alpha-beta dimers. Interacts with CD163. Interacts with ERGIC3. In terms of tissue distribution, expressed by the liver and secreted in plasma.

The protein localises to the secreted. In terms of biological role, as a result of hemolysis, hemoglobin is found to accumulate in the kidney and is secreted in the urine. Haptoglobin captures, and combines with free plasma hemoglobin to allow hepatic recycling of heme iron and to prevent kidney damage. Haptoglobin also acts as an antioxidant, has antibacterial activity and plays a role in modulating many aspects of the acute phase response. Hemoglobin/haptoglobin complexes are rapidly cleared by the macrophage CD163 scavenger receptor expressed on the surface of liver Kupfer cells through an endocytic lysosomal degradation pathway. The polypeptide is Haptoglobin (HP) (Sus scrofa (Pig)).